The sequence spans 167 residues: Translation initiation factor IF-3 (167 aa).

Belongs to the IF-3 family. As to quaternary structure, monomer.

It is found in the cytoplasm. IF-3 binds to the 30S ribosomal subunit and shifts the equilibrium between 70S ribosomes and their 50S and 30S subunits in favor of the free subunits, thus enhancing the availability of 30S subunits on which protein synthesis initiation begins. The protein is Translation initiation factor IF-3 of Bacillus cereus (strain ATCC 14579 / DSM 31 / CCUG 7414 / JCM 2152 / NBRC 15305 / NCIMB 9373 / NCTC 2599 / NRRL B-3711).